The sequence spans 382 residues: uncharacterized protein (382 aa).

The next 12 helical transmembrane spans lie at 8–28, 45–65, 75–95, 102–122, 131–151, 157–177, 204–224, 231–251, 270–290, 291–311, 325–345, and 349–369; these read VMLL…LNTL, MVSS…GYLI, YLAS…VGFW, FIAG…LMCS, LLAA…LLVS, LLHV…PLLF, LGVN…GLMP, GMAN…GILG, VQVF…AMAP, ALFI…AWAC, ALLL…AMLM, and SDNL…LMLL.

This sequence belongs to the major facilitator superfamily. YcaD (TC 2.A.1.26) family.

The protein localises to the cell inner membrane. This is an uncharacterized protein from Salmonella enteritidis PT4 (strain P125109).